Here is a 373-residue protein sequence, read N- to C-terminus: 3-dehydroquinate synthase (373 aa).

NAD(+)-binding positions include 67-72 (EGEETK), 101-105 (GVILD), 125-126 (TT), K138, and K147. The Zn(2+) site is built by E180, H240, and H256.

Belongs to the sugar phosphate cyclases superfamily. Dehydroquinate synthase family. NAD(+) serves as cofactor. Co(2+) is required as a cofactor. The cofactor is Zn(2+).

The protein localises to the cytoplasm. The catalysed reaction is 7-phospho-2-dehydro-3-deoxy-D-arabino-heptonate = 3-dehydroquinate + phosphate. It functions in the pathway metabolic intermediate biosynthesis; chorismate biosynthesis; chorismate from D-erythrose 4-phosphate and phosphoenolpyruvate: step 2/7. Its function is as follows. Catalyzes the conversion of 3-deoxy-D-arabino-heptulosonate 7-phosphate (DAHP) to dehydroquinate (DHQ). The sequence is that of 3-dehydroquinate synthase from Chlamydia trachomatis serovar L2 (strain ATCC VR-902B / DSM 19102 / 434/Bu).